The sequence spans 1034 residues: Probable isoleucine--tRNA ligase, mitochondrial (1034 aa).

Residues 1 to 32 (MISLNNSFFNKRVIVNSFNNYKRSFGTKSQNE) constitute a mitochondrion transit peptide. Residues 94-104 (PYANGDLHMGH) carry the 'HIGH' region motif. A 'KMSKS' region motif is present at residues 655 to 659 (KMSKS). K658 contacts ATP.

The protein belongs to the class-I aminoacyl-tRNA synthetase family.

The protein resides in the mitochondrion matrix. The catalysed reaction is tRNA(Ile) + L-isoleucine + ATP = L-isoleucyl-tRNA(Ile) + AMP + diphosphate. This chain is Probable isoleucine--tRNA ligase, mitochondrial (mileS), found in Dictyostelium discoideum (Social amoeba).